The sequence spans 182 residues: Protein GrpE (182 aa).

The interval 1–37 (MSDSSKERKKKFTGMVNKQKSEDQQNNSKQADDLDEL) is disordered.

It belongs to the GrpE family. As to quaternary structure, homodimer.

The protein localises to the cytoplasm. In terms of biological role, participates actively in the response to hyperosmotic and heat shock by preventing the aggregation of stress-denatured proteins, in association with DnaK and GrpE. It is the nucleotide exchange factor for DnaK and may function as a thermosensor. Unfolded proteins bind initially to DnaJ; upon interaction with the DnaJ-bound protein, DnaK hydrolyzes its bound ATP, resulting in the formation of a stable complex. GrpE releases ADP from DnaK; ATP binding to DnaK triggers the release of the substrate protein, thus completing the reaction cycle. Several rounds of ATP-dependent interactions between DnaJ, DnaK and GrpE are required for fully efficient folding. In Wolbachia sp. subsp. Brugia malayi (strain TRS), this protein is Protein GrpE.